The following is a 465-amino-acid chain: tRNA modification GTPase MnmE (465 aa).

(6S)-5-formyl-5,6,7,8-tetrahydrofolate-binding residues include Arg27, Glu91, and Arg130. The TrmE-type G domain maps to 227 to 386 (GLSTAIIGRP…LEAKIADLFF (160 aa)). Asn237 contributes to the K(+) binding site. GTP is bound by residues 237–242 (NVGKSS), 256–262 (TDIAGTT), and 281–284 (DTAG). Ser241 contacts Mg(2+). K(+) contacts are provided by Thr256, Ile258, and Thr261. Thr262 contributes to the Mg(2+) binding site. Lys465 lines the (6S)-5-formyl-5,6,7,8-tetrahydrofolate pocket.

It belongs to the TRAFAC class TrmE-Era-EngA-EngB-Septin-like GTPase superfamily. TrmE GTPase family. As to quaternary structure, homodimer. Heterotetramer of two MnmE and two MnmG subunits. It depends on K(+) as a cofactor.

The protein resides in the cytoplasm. Functionally, exhibits a very high intrinsic GTPase hydrolysis rate. Involved in the addition of a carboxymethylaminomethyl (cmnm) group at the wobble position (U34) of certain tRNAs, forming tRNA-cmnm(5)s(2)U34. This chain is tRNA modification GTPase MnmE, found in Enterococcus faecalis (strain ATCC 700802 / V583).